The primary structure comprises 341 residues: Anthranilate phosphoribosyltransferase (341 aa).

5-phospho-alpha-D-ribose 1-diphosphate contacts are provided by residues Gly-79, 82–83 (GD), Thr-87, 89–92 (NIST), 107–115 (KHGNRAVSS), and Ser-119. Gly-79 is a binding site for anthranilate. Ser-91 is a binding site for Mg(2+). Residue Asn-110 participates in anthranilate binding. Arg-165 contacts anthranilate. The Mg(2+) site is built by Asp-224 and Glu-225.

This sequence belongs to the anthranilate phosphoribosyltransferase family. As to quaternary structure, homodimer. Requires Mg(2+) as cofactor.

The catalysed reaction is N-(5-phospho-beta-D-ribosyl)anthranilate + diphosphate = 5-phospho-alpha-D-ribose 1-diphosphate + anthranilate. It participates in amino-acid biosynthesis; L-tryptophan biosynthesis; L-tryptophan from chorismate: step 2/5. In terms of biological role, catalyzes the transfer of the phosphoribosyl group of 5-phosphorylribose-1-pyrophosphate (PRPP) to anthranilate to yield N-(5'-phosphoribosyl)-anthranilate (PRA). The sequence is that of Anthranilate phosphoribosyltransferase from Bacillus thuringiensis subsp. konkukian (strain 97-27).